The following is a 147-amino-acid chain: Myoglobin (147 aa).

In terms of domain architecture, Globin spans 2 to 141 (ADFDAVLKCW…IIADLEANYK (140 aa)). H60 lines the nitrite pocket. H60 contacts O2. H89 lines the heme b pocket.

Belongs to the globin family. Monomeric.

It localises to the cytoplasm. It is found in the sarcoplasm. It carries out the reaction Fe(III)-heme b-[protein] + nitric oxide + H2O = Fe(II)-heme b-[protein] + nitrite + 2 H(+). The catalysed reaction is H2O2 + AH2 = A + 2 H2O. In terms of biological role, monomeric heme protein which primary function is to store oxygen and facilitate its diffusion within muscle tissues. Reversibly binds oxygen through a pentacoordinated heme iron and enables its timely and efficient release as needed during periods of heightened demand. Depending on the oxidative conditions of tissues and cells, and in addition to its ability to bind oxygen, it also has a nitrite reductase activity whereby it regulates the production of bioactive nitric oxide. Under stress conditions, like hypoxia and anoxia, it also protects cells against reactive oxygen species thanks to its pseudoperoxidase activity. The polypeptide is Myoglobin (mb) (Thunnus alalunga (Albacore)).